A 420-amino-acid chain; its full sequence is Tyrosine-protein phosphatase non-receptor type 20 (420 aa).

A compositionally biased stretch (basic and acidic residues) spans 1–11; sequence MSSPRDFRAEP. Disordered regions lie at residues 1 to 47 and 68 to 108; these read MSSP…VFEN and DVFE…SQAL. A compositionally biased stretch (polar residues) spans 31 to 41; sequence LPSSSQENTPR. Phosphoserine occurs at positions 76 and 120. Residues 159 to 412 enclose the Tyrosine-protein phosphatase domain; sequence IMQEFMALEL…HFCYDIVLEV (254 aa). Substrate is bound by residues aspartate 323, 353–359, and glutamine 397; that span reads CSAGIGR. Cysteine 353 functions as the Phosphocysteine intermediate in the catalytic mechanism.

This sequence belongs to the protein-tyrosine phosphatase family. Non-receptor class subfamily. Present in many cell lines (at protein level). Widely expressed.

The protein localises to the nucleus. Its subcellular location is the cytoplasm. The protein resides in the cytoskeleton. It localises to the microtubule organizing center. It is found in the centrosome. It catalyses the reaction O-phospho-L-tyrosyl-[protein] + H2O = L-tyrosyl-[protein] + phosphate. Functionally, tyrosine-protein phosphatase targeted to sites of actin polymerization in response of varied extracellular stimuli. Has tyrosine phosphatase activity towards various tyrosyl phosphorylated substrates. The polypeptide is Tyrosine-protein phosphatase non-receptor type 20 (Homo sapiens (Human)).